Consider the following 227-residue polypeptide: PKHD-type hydroxylase M446_1130 (227 aa).

The Fe2OG dioxygenase domain occupies 78–178 (QIFPPLFNRY…RVASFFWLQS (101 aa)). Fe cation-binding residues include His-96, Asp-98, and His-159. Residue Arg-169 coordinates 2-oxoglutarate.

The cofactor is Fe(2+). It depends on L-ascorbate as a cofactor.

This Methylobacterium sp. (strain 4-46) protein is PKHD-type hydroxylase M446_1130.